Consider the following 411-residue polypeptide: Imidazolonepropionase (411 aa).

2 residues coordinate Fe(3+): His75 and His77. Zn(2+)-binding residues include His75 and His77. 4-imidazolone-5-propanoate is bound by residues Arg84, Tyr147, and His180. Residue Tyr147 coordinates N-formimidoyl-L-glutamate. His245 contacts Fe(3+). Zn(2+) is bound at residue His245. Gln248 contributes to the 4-imidazolone-5-propanoate binding site. Asp320 is a binding site for Fe(3+). Residue Asp320 coordinates Zn(2+). Asn322 and Gly324 together coordinate N-formimidoyl-L-glutamate. A 4-imidazolone-5-propanoate-binding site is contributed by Thr325.

This sequence belongs to the metallo-dependent hydrolases superfamily. HutI family. The cofactor is Zn(2+). It depends on Fe(3+) as a cofactor.

The protein resides in the cytoplasm. The enzyme catalyses 4-imidazolone-5-propanoate + H2O = N-formimidoyl-L-glutamate. It participates in amino-acid degradation; L-histidine degradation into L-glutamate; N-formimidoyl-L-glutamate from L-histidine: step 3/3. In terms of biological role, catalyzes the hydrolytic cleavage of the carbon-nitrogen bond in imidazolone-5-propanoate to yield N-formimidoyl-L-glutamate. It is the third step in the universal histidine degradation pathway. The sequence is that of Imidazolonepropionase from Aeromonas salmonicida (strain A449).